We begin with the raw amino-acid sequence, 1383 residues long: PAS domain-containing serine/threonine-protein kinase (1383 aa).

Methionine 1 is subject to N-acetylmethionine. Serine 19 is subject to Phosphoserine. Threonine 31 carries the post-translational modification Phosphothreonine. PAS domains lie at 117-188 (SGSL…VEAD) and 333-400 (YQAS…SVQL). Serine 1000 is subject to Phosphoserine. In terms of domain architecture, Protein kinase spans 1059–1311 (YNTISPLGSG…LEKLIRDPWV (253 aa)). ATP is bound by residues 1065-1073 (LGSGAFGFV), lysine 1088, and 1142-1149 (EKHGSGMD). The Proton acceptor role is filled by aspartate 1188. Aspartate 1206 is an ATP binding site. Phosphothreonine; by autocatalysis occurs at positions 1221 and 1225. The segment at 1344–1383 (GSRSPSEMAQREGLCGPPAPRETRGDQHCLHLKDPSLPVS) is disordered. The segment covering 1364–1377 (RETRGDQHCLHLKD) has biased composition (basic and acidic residues).

The protein belongs to the protein kinase superfamily. CAMK Ser/Thr protein kinase family. In terms of processing, autophosphorylated on Thr-1221 and Thr-1225. Autophosphorylation is activated by phospholipids. In terms of tissue distribution, ubiquitously expressed. Strongly up-regulated in postmeiotic germ cells during spermatogenesis.

It is found in the cytoplasm. Its subcellular location is the nucleus. The enzyme catalyses L-seryl-[protein] + ATP = O-phospho-L-seryl-[protein] + ADP + H(+). It carries out the reaction L-threonyl-[protein] + ATP = O-phospho-L-threonyl-[protein] + ADP + H(+). Protein kinase activity is inhibited by the first PAS domain: binding of an unidentified ligand desinhibits the protein kinase activity. May be activated by autophosphorylation on Thr-1221 and Thr-1225. Autophosphorylation is enhanced upon phosphatidylinositol monophosphate (phosphatidylinositol 4-phosphate) binding and inhibited upon phosphatidylinositol bi- and tri-phosphate binding. In contrast, phosphorylation of target proteins is inhibited upon all phosphatidylinositol-binding (phosphatidylinositol mono- bi- and tri-phosphate). Functionally, serine/threonine-protein kinase involved in energy homeostasis and protein translation. Phosphorylates EEF1A1, GYS1, PDX1 and RPS6. Probably plays a role under changing environmental conditions (oxygen, glucose, nutrition), rather than under standard conditions. Acts as a sensor involved in energy homeostasis: regulates glycogen synthase synthesis by mediating phosphorylation of GYS1, leading to GYS1 inactivation. May be involved in glucose-stimulated insulin production in pancreas and regulation of glucagon secretion by glucose in alpha cells; however such data require additional evidences. May play a role in regulation of protein translation by phosphorylating EEF1A1, leading to increase translation efficiency. May also participate in respiratory regulation. The sequence is that of PAS domain-containing serine/threonine-protein kinase (Pask) from Mus musculus (Mouse).